Consider the following 758-residue polypeptide: MAAPTPSNRIEERSGHASCVRADADLPPVAILGRSPITLRHKIFFVAVAVIGALAWTVVAFFRNEPVNAVWIVVAAGCTYIIGFRFYARLIEMKVVRPRDDHATPAEILDDGTDYVPTDRRVVFGHHFAAIAGAGPLVGPVLATQMGYLPSSIWIVVGAVLAGCVQDYLVLWISVRRRGRSLGQMVRDELGATAGVAALVGIPVIITIVIAVLALVVVRALAKSPWGVFSIAMTIPIAIFMGCYLRFLRPGRVSEVSLIGIGLLLLAVVSGDWVAHTSWGAAWFSLSPVTLCWLLISYGFAASVLPVWLLLAPRDYLSTFMKVGTIALLAIGVCAAHPIIEAPAVSKFAGSGNGPVFAGSLFPFLFITIACGALSGFHALICSGTTPKMLEKEGQMRVIGYGGMMTESFVAVIALLTAAILDQHLYFTLNAPSLHTHDSAATAAKYVNGLGLTGSPVTPDHISQAAASVGEQTIVSRTGGAPTLAFGMAEMLHRVVGGVGLKAFWYHFAIMFEALFILTTVDAGTRAARFMISDALGNFGGVLRKLQNPSWRPGAWACRLVVVAAWGSILLLGVTDPLGGINTLFPLFGIANQLLAGIALTVITVVVIKKGRLKWAWIPGIPLLWDLAVTLTASWQKIFSADPSVGYWTQHAHYAAAQHAGETAFGSATNADEINDVVRNTFVQGTLSIVFVVVVVLVVVAGVIVALKTIRGRGIPLAEDDPAPSTLFAPAGLIPTAAERKLQRRLGAPASASVAAPD.

16 consecutive transmembrane segments (helical) span residues 42–62, 67–87, 122–142, 153–173, 198–218, 225–245, 256–276, 291–311, 320–340, 361–381, 401–421, 498–518, 561–581, 588–608, 615–635, and 687–707; these read KIFF…VAFF, VNAV…FRFY, VVFG…GPVL, IWIV…VLWI, ALVG…LVVV, PWGV…GCYL, VSLI…WVAH, LCWL…WLLL, FMKV…HPII, LFPF…HALI, YGGM…AAIL, GVGL…LFIL, VVVA…LGGI, FGIA…VVVI, WAWI…TASW, and LSIV…IVAL.

Belongs to the peptide transporter carbon starvation (CstA) (TC 2.A.114) family.

It is found in the cell membrane. Functionally, involved in peptide utilization. In Mycobacterium tuberculosis (strain ATCC 25618 / H37Rv), this protein is Peptide transporter CstA (cstA).